The sequence spans 210 residues: Inner membrane-spanning protein YciB (210 aa).

Helical transmembrane passes span 12 to 32, 53 to 73, 78 to 98, 115 to 135, 148 to 168, and 175 to 195; these read EVSPLLKLVLELGPLMVFFFA, IFIATGLFMAATAAALIASWI, LPMMPLVSGIVVFVFGALTLW, LFGAILLGGLLFGKSLLGYVF, KLTIRWGVFFLFLAVLNEVIW, and FWVAFKVWGTMPITILFTLAQ.

Belongs to the YciB family.

It localises to the cell inner membrane. Functionally, plays a role in cell envelope biogenesis, maintenance of cell envelope integrity and membrane homeostasis. The sequence is that of Inner membrane-spanning protein YciB from Rhizobium meliloti (strain 1021) (Ensifer meliloti).